The chain runs to 202 residues: Peptide methionine sulfoxide reductase B2, chloroplastic (202 aa).

The transit peptide at 1–63 (MAFNIITPGR…RRGFHGGRIV (63 aa)) directs the protein to the chloroplast. One can recognise a MsrB domain in the interval 77–198 (EEEWRAILSP…NSISLKFTPE (122 aa)). The Zn(2+) site is built by cysteine 116, cysteine 119, cysteine 162, and cysteine 165. Cysteine 134 and cysteine 187 form a disulfide bridge. The active-site Nucleophile is cysteine 187.

This sequence belongs to the MsrB Met sulfoxide reductase family. Zn(2+) serves as cofactor. In terms of tissue distribution, expressed in stems, young leaves, floral buds and flowers. Expressed at low levels in roots, mature leaves and siliques (at protein level).

The protein localises to the plastid. It localises to the chloroplast. It carries out the reaction L-methionyl-[protein] + [thioredoxin]-disulfide + H2O = L-methionyl-(R)-S-oxide-[protein] + [thioredoxin]-dithiol. Catalyzes the reduction of methionine sulfoxide (MetSO) to methionine in proteins. Specifically reduces the MetSO R-enantiomer. Plays a protective role against oxidative stress by restoring activity to proteins that have been inactivated by methionine oxidation. May play an essential function in association with MSRB1 in maintaining vegetative growth during environmental constraints, through the preservation of photosynthetic antennae. MSRB1 and MSRB2 account for most of the leaf peptide MSR capacity. In Arabidopsis thaliana (Mouse-ear cress), this protein is Peptide methionine sulfoxide reductase B2, chloroplastic.